A 315-amino-acid polypeptide reads, in one-letter code: Cytochrome bo(3) ubiquinol oxidase subunit 2 (315 aa).

The signal sequence occupies residues 1-24 (MRLRKYNKSLGWLSLFAGTVLLSG). A lipid anchor (N-palmitoyl cysteine) is attached at Cys-25. Cys-25 carries S-diacylglycerol cysteine lipidation. Topologically, residues 25 to 50 (CNSALLDPKGQIGLEQRSLILTAFGL) are periplasmic. The helical transmembrane segment at 51-68 (MLIVVIPAILMAVGFAWK) threads the bilayer. Over 69–92 (YRASNKDAKYSPNWSHSNKVEAVV) the chain is Cytoplasmic. Residues 93-111 (WTVPILIIIFLAVLTWKTT) traverse the membrane as a helical segment. Over 112-315 (HALEPSKPLA…MDMSHAESAH (204 aa)) the chain is Periplasmic. Positions 288 to 315 (MDMTQPEGEHSAHEGMEGMDMSHAESAH) are disordered. The segment covering 294–315 (EGEHSAHEGMEGMDMSHAESAH) has biased composition (basic and acidic residues).

Belongs to the cytochrome c oxidase subunit 2 family. In terms of assembly, heterooctamer of two A chains, two B chains, two C chains and two D chains.

It is found in the cell inner membrane. Its function is as follows. Cytochrome bo(3) ubiquinol terminal oxidase is the component of the aerobic respiratory chain of E.coli that predominates when cells are grown at high aeration. Has proton pump activity across the membrane in addition to electron transfer, pumping 2 protons/electron. The protein is Cytochrome bo(3) ubiquinol oxidase subunit 2 (cyoA) of Escherichia coli O6:H1 (strain CFT073 / ATCC 700928 / UPEC).